The primary structure comprises 190 residues: MSSSPAVKGLTDEEQKTLEPVIKTYHQFEPDPTTCTSLITQRIHAPASVVWPLIRRFDNPERYKHFVKRCRLISGDGDVGSVREVTVISGLPASTSTERLEFVDDDHRVLSFRVVGGEHRLKNYKSVTSVNEFLNQDSGKVYTVVLESYTVDIPEGNTEEDTKMFVDTVVKLNLQKLGVAATSAPMHDDE.

Residues 28-182 are START-like; that stretch reads FEPDPTTCTS…NLQKLGVAAT (155 aa). Abscisate is bound by residues K64, 93-98, 120-126, and E147; these read ASTSTE and RLKNYKS. Positions 89–93 match the Gate loop motif; it reads SGLPA. The short motif at 119 to 121 is the Latch loop element; that stretch reads HRL.

This sequence belongs to the PYR/PYL/RCAR abscisic acid intracellular receptor family. As to quaternary structure, homodimer. Binds ABA on one subunit only. Interacts with HAB1, ABI1 and ABI2, and possibly with other PP2Cs. Binds to CARs protein in an ABA-independent manner, both at the plasma membrane and in the nucleus.

The protein resides in the cytoplasm. Its subcellular location is the nucleus. It localises to the cell membrane. Its function is as follows. Receptor for abscisic acid (ABA) required for ABA-mediated responses such as stomatal closure and germination inhibition. Inhibits the activity of group-A protein phosphatases type 2C (PP2Cs) when activated by ABA. Can be activated by both (-)-ABA and (+)-ABA. This Arabidopsis thaliana (Mouse-ear cress) protein is Abscisic acid receptor PYL2 (PYL2).